Reading from the N-terminus, the 354-residue chain is Nicotinate-nucleotide--dimethylbenzimidazole phosphoribosyltransferase (354 aa).

Glu-319 acts as the Proton acceptor in catalysis.

It belongs to the CobT family.

It carries out the reaction 5,6-dimethylbenzimidazole + nicotinate beta-D-ribonucleotide = alpha-ribazole 5'-phosphate + nicotinate + H(+). Its pathway is nucleoside biosynthesis; alpha-ribazole biosynthesis; alpha-ribazole from 5,6-dimethylbenzimidazole: step 1/2. Functionally, catalyzes the synthesis of alpha-ribazole-5'-phosphate from nicotinate mononucleotide (NAMN) and 5,6-dimethylbenzimidazole (DMB). This Chlorobium chlorochromatii (strain CaD3) protein is Nicotinate-nucleotide--dimethylbenzimidazole phosphoribosyltransferase.